The chain runs to 166 residues: NAD(P)H-quinone oxidoreductase subunit I, chloroplastic (166 aa).

4Fe-4S ferredoxin-type domains are found at residues 55–84 and 95–124; these read GRIHFEFDKCIACEVCVRVCPIDLPVVDWK and LNYSIDFGICIFCGNCVEYCPTNCLSMTEE. [4Fe-4S] cluster is bound by residues C64, C67, C70, C74, C104, C107, C110, and C114.

The protein belongs to the complex I 23 kDa subunit family. As to quaternary structure, NDH is composed of at least 16 different subunits, 5 of which are encoded in the nucleus. It depends on [4Fe-4S] cluster as a cofactor.

The protein localises to the plastid. It is found in the chloroplast thylakoid membrane. The enzyme catalyses a plastoquinone + NADH + (n+1) H(+)(in) = a plastoquinol + NAD(+) + n H(+)(out). It catalyses the reaction a plastoquinone + NADPH + (n+1) H(+)(in) = a plastoquinol + NADP(+) + n H(+)(out). In terms of biological role, NDH shuttles electrons from NAD(P)H:plastoquinone, via FMN and iron-sulfur (Fe-S) centers, to quinones in the photosynthetic chain and possibly in a chloroplast respiratory chain. The immediate electron acceptor for the enzyme in this species is believed to be plastoquinone. Couples the redox reaction to proton translocation, and thus conserves the redox energy in a proton gradient. This chain is NAD(P)H-quinone oxidoreductase subunit I, chloroplastic, found in Parthenium hysterophorus (Santa Maria feverfew).